The chain runs to 1085 residues: Solute carrier family 12 member 4 (1085 aa).

The Cytoplasmic segment spans residues 1 to 119; that stretch reads MPHFTVVPVD…RRAAEAPSMG (119 aa). A phosphoserine mark is found at serine 24, serine 47, serine 51, serine 81, and serine 88. Residues 120-141 form a discontinuously helical membrane-spanning segment; it reads TLMGVYLPCLQNIFGVILFLRL. The K(+) site is built by asparagine 131 and isoleucine 132. Over 142 to 149 the chain is Extracellular; that stretch reads TWMVGTAG. A helical membrane pass occupies residues 150–172; sequence VLQALLIVLICCCCTLLTAISMS. At 173–196 the chain is on the cytoplasmic side; it reads AIATNGVVPAGGSYFMISRSLGPE. Residues 197-225 traverse the membrane as a helical segment; the sequence is FGGAVGLCFYLGTTFAAAMYILGAIEILL. Position 216 (tyrosine 216) interacts with K(+). Topologically, residues 226 to 248 are extracellular; the sequence is TYIAPPAAIFYPSGAHDTSNATL. Asparagine 245 carries an N-linked (GlcNAc...) asparagine glycan. 2 consecutive transmembrane segments (helical) span residues 249 to 271 and 272 to 297; these read NNMR…VGVK and YVNK…GGIK. Residues 298 to 419 are Extracellular-facing; the sequence is SIFDPPVFPV…LYVVADIATS (122 aa). The cysteines at positions 308 and 323 are disulfide-linked. N-linked (GlcNAc...) asparagine glycans are attached at residues asparagine 312, asparagine 331, asparagine 347, and asparagine 361. A disulfide bond links cysteine 343 and cysteine 353. Residues 420–440 form a helical membrane-spanning segment; sequence FTVLVGIFFPSVTGIMAGSNR. 2 residues coordinate K(+): proline 429 and threonine 432. Positions 433, 434, and 435 each coordinate chloride. Residues 441–450 lie on the Cytoplasmic side of the membrane; sequence SGDLRDAQKS. The helical transmembrane segment at 451–473 threads the bilayer; that stretch reads IPVGTILAIITTSLVYFSSVVLF. The Extracellular segment spans residues 474-504; that stretch reads GACIEGVVLRDKYGDGVSRNLVVGTLAWPSP. Residues 505 to 531 form a helical membrane-spanning segment; it reads WVIVIGSFFSTCGAGLQSLTGAPRLLQ. The Cytoplasmic portion of the chain corresponds to 532-554; sequence AIAKDNIIPFLRVFGHGKVNGEP. The next 2 membrane-spanning stretches (helical) occupy residues 555 to 575 and 576 to 598; these read TWAL…ASLD and MVAP…ACAV. Residue tyrosine 589 coordinates chloride. Residues 599–612 are Cytoplasmic-facing; it reads QTLLRTPNWRPRFK. The next 2 helical transmembrane spans lie at 613–635 and 636–651; these read YYHW…VSSW and YYAL…IYKY. Residues 652 to 1085 lie on the Cytoplasmic side of the membrane; it reads IEYQGAEKEW…GGREVITIYS (434 aa). Positions 665–681 are scissor helix; it reads IRGLSLSAARYALLRLE. Leucine 697, lysine 699, lysine 707, tyrosine 708, and valine 730 together coordinate ATP. Residue serine 734 is modified to Phosphoserine. Glycine 794, tryptophan 795, and tyrosine 797 together coordinate ATP. Phosphoserine occurs at positions 916 and 967. Threonine 983 carries the post-translational modification Phosphothreonine. Serine 1050 carries the post-translational modification Phosphoserine.

The protein belongs to the SLC12A transporter family. K/Cl co-transporter subfamily. As to quaternary structure, homodimer; adopts a domain-swap conformation at the scissor helices connecting the transmembrane domain and C-terminal domain. Heterodimer with other K-Cl cotransporters. Phosphorylated, phosphorylation may regulate transporter activity. In terms of tissue distribution, ubiquitous. Levels are much higher in erythrocytes from patients with Hb SC and Hb SS compared to normal AA erythrocytes. This may contribute to red blood cell dehydration and to the manifestation of sickle cell disease by increasing the intracellular concentration of HbS. As to expression, not detected in circulating reticulocytes.

It localises to the cell membrane. The enzyme catalyses K(+)(in) + chloride(in) = K(+)(out) + chloride(out). With respect to regulation, inhibited by WNK3. Mediates electroneutral potassium-chloride cotransport when activated by cell swelling. May contribute to cell volume homeostasis in single cells. May be involved in the regulation of basolateral Cl(-) exit in NaCl absorbing epithelia. Its function is as follows. No transporter activity. This is Solute carrier family 12 member 4 from Homo sapiens (Human).